A 271-amino-acid polypeptide reads, in one-letter code: Intercellular adhesion molecule 4 (271 aa).

A signal peptide spans 1-22; it reads MGSLFPLSLLFFLAAAYPGVGS. Residues 23–240 lie on the Extracellular side of the membrane; it reads ALGRRTKRAQ…MLAWSPAPTA (218 aa). 2 Ig-like C2-type domains span residues 62–124 and 146–217; these read GKSV…TRWA and GRKY…LNLD. N-linked (GlcNAc...) asparagine glycosylation is found at Asn-68, Asn-78, Asn-190, and Asn-223. Disulfide bonds link Cys-69–Cys-113, Cys-69–Cys-117, Cys-73–Cys-117, and Cys-153–Cys-210. A helical transmembrane segment spans residues 241 to 261; it reads LASGSIAALVGILLTVGAAYL. The Cytoplasmic portion of the chain corresponds to 262–271; that stretch reads CKCLAMKSQA.

The protein belongs to the immunoglobulin superfamily. ICAM family. Post-translationally, N- and O-glycosylated. In terms of tissue distribution, erythrocytes.

The protein resides in the cell membrane. It is found in the secreted. Its function is as follows. ICAM proteins are ligands for the leukocyte adhesion protein LFA-1 (integrin alpha-L/beta-2). ICAM4 is also a ligand for alpha-4/beta-1 and alpha-V integrins. In Homo sapiens (Human), this protein is Intercellular adhesion molecule 4 (ICAM4).